The primary structure comprises 342 residues: Vancomycin B-type resistance protein VanB (342 aa).

ATP contacts are provided by residues Lys132, 168–170, 176–177, 206–213, and Phe240; these read FVK, SS, and EQAISGCE. The region spanning 136 to 337 is the ATP-grasp domain; the sequence is YILTKNAGIA…LPALIDSLIT (202 aa). Residue His243 participates in substrate binding. 303 to 304 contacts ATP; that stretch reads NE. Mg(2+)-binding residues include Glu304 and Asn306.

This sequence belongs to the D-alanine--D-alanine ligase family. It depends on Mg(2+) as a cofactor. Requires Mn(2+) as cofactor.

It localises to the cell membrane. It catalyses the reaction (R)-lactate + D-alanine + ATP = D-alanyl-(R)-lactate + ADP + phosphate. In terms of biological role, required for high-level resistance to glycopeptides antibiotics. D-Ala--D-Ala ligase of altered specificity which catalyzes ester bond formation between D-Ala and various D-hydroxy acids; producing a peptidoglycan which does not terminate in D-alanine but in D-lactate, thus preventing vancomycin binding. This chain is Vancomycin B-type resistance protein VanB (vanB), found in Enterococcus faecalis (strain ATCC 700802 / V583).